The sequence spans 327 residues: Probable cell division protein WhiA (327 aa).

Positions 275-308 form a DNA-binding region, H-T-H motif; it reads SLEELGRLADPPMTKDAVAGRIRRLLSMADRKAK. Positions 304 to 327 are disordered; the sequence is DRKAKQDGIPDTESAVTPDLLEDA.

The protein belongs to the WhiA family.

Functionally, involved in cell division and chromosome segregation. The polypeptide is Probable cell division protein WhiA (Mycolicibacterium gilvum (strain PYR-GCK) (Mycobacterium gilvum (strain PYR-GCK))).